The following is a 421-amino-acid chain: Serine hydroxymethyltransferase (421 aa).

Residues Leu121 and 125–127 contribute to the (6S)-5,6,7,8-tetrahydrofolate site; that span reads GHL. Residue Lys230 is modified to N6-(pyridoxal phosphate)lysine.

This sequence belongs to the SHMT family. Homodimer. Pyridoxal 5'-phosphate serves as cofactor.

It is found in the cytoplasm. The catalysed reaction is (6R)-5,10-methylene-5,6,7,8-tetrahydrofolate + glycine + H2O = (6S)-5,6,7,8-tetrahydrofolate + L-serine. Its pathway is one-carbon metabolism; tetrahydrofolate interconversion. It functions in the pathway amino-acid biosynthesis; glycine biosynthesis; glycine from L-serine: step 1/1. Its function is as follows. Catalyzes the reversible interconversion of serine and glycine with tetrahydrofolate (THF) serving as the one-carbon carrier. This reaction serves as the major source of one-carbon groups required for the biosynthesis of purines, thymidylate, methionine, and other important biomolecules. Also exhibits THF-independent aldolase activity toward beta-hydroxyamino acids, producing glycine and aldehydes, via a retro-aldol mechanism. In Carboxydothermus hydrogenoformans (strain ATCC BAA-161 / DSM 6008 / Z-2901), this protein is Serine hydroxymethyltransferase.